The primary structure comprises 141 residues: Large ribosomal subunit protein uL16 (141 aa).

Belongs to the universal ribosomal protein uL16 family. Part of the 50S ribosomal subunit.

Binds 23S rRNA and is also seen to make contacts with the A and possibly P site tRNAs. The sequence is that of Large ribosomal subunit protein uL16 from Sulfurimonas denitrificans (strain ATCC 33889 / DSM 1251) (Thiomicrospira denitrificans (strain ATCC 33889 / DSM 1251)).